Here is a 469-residue protein sequence, read N- to C-terminus: Cysteine--tRNA ligase (469 aa).

Cysteine 28 is a binding site for Zn(2+). The short motif at 30 to 40 (CTVYDLCHIGH) is the 'HIGH' region element. Residues cysteine 216, histidine 241, and glutamate 245 each contribute to the Zn(2+) site. A 'KMSKS' region motif is present at residues 273–277 (KMSKS). Residue lysine 276 participates in ATP binding.

Belongs to the class-I aminoacyl-tRNA synthetase family. In terms of assembly, monomer. Zn(2+) is required as a cofactor.

The protein resides in the cytoplasm. The enzyme catalyses tRNA(Cys) + L-cysteine + ATP = L-cysteinyl-tRNA(Cys) + AMP + diphosphate. In Colwellia psychrerythraea (strain 34H / ATCC BAA-681) (Vibrio psychroerythus), this protein is Cysteine--tRNA ligase.